A 145-amino-acid chain; its full sequence is Oocyte zinc finger protein XlCOF8.4I (145 aa).

The interval 1-25 (HKREADFCSKGNLTNPEISPVEHYP) is disordered. The C2H2-type zinc finger occupies 123–145 (LSCSECGKCFSTYHVLARHQKTH).

It belongs to the krueppel C2H2-type zinc-finger protein family.

It is found in the nucleus. Its function is as follows. May be involved in transcriptional regulation. The sequence is that of Oocyte zinc finger protein XlCOF8.4I from Xenopus laevis (African clawed frog).